The chain runs to 458 residues: Cysteine--tRNA ligase (458 aa).

Cysteine 27 contributes to the Zn(2+) binding site. The 'HIGH' region signature appears at 29–39 (ITPQSEPHIGH). The Zn(2+) site is built by cysteine 207, histidine 232, and glutamate 236. The 'KMSKS' region motif lies at 265–269 (KMSKS). Lysine 268 provides a ligand contact to ATP.

Belongs to the class-I aminoacyl-tRNA synthetase family. In terms of assembly, monomer. It depends on Zn(2+) as a cofactor.

It is found in the cytoplasm. It carries out the reaction tRNA(Cys) + L-cysteine + ATP = L-cysteinyl-tRNA(Cys) + AMP + diphosphate. The polypeptide is Cysteine--tRNA ligase (Dehalococcoides mccartyi (strain ATCC BAA-2266 / KCTC 15142 / 195) (Dehalococcoides ethenogenes (strain 195))).